Consider the following 286-residue polypeptide: uncharacterized protein (286 aa).

H183 acts as the Proton donor in catalysis. C277 functions as the Nucleophile in the catalytic mechanism.

This sequence belongs to the DDAH family.

This is an uncharacterized protein from Bacillus subtilis (strain 168).